The sequence spans 785 residues: Cadherin-7 (785 aa).

The first 27 residues, 1–27 (MKLGKVELCRFLQLIALFLCFSGMNQA), serve as a signal peptide directing secretion. Positions 28–47 (ELPRSRSKPYFQLGRSRTKR) are excised as a propeptide. The Extracellular portion of the chain corresponds to 28 to 607 (ELPRSRSKPY…AYILPAGLST (580 aa)). Cadherin domains are found at residues 49–153 (WVWN…EPKF), 154–262 (LDGP…PPRF), 263–377 (PRRS…PPVF), 378–482 (SSPL…APEF), and 482–599 (FAMD…AEAY). Residues N449 and N530 are each glycosylated (N-linked (GlcNAc...) asparagine). The helical transmembrane segment at 608 to 628 (GALIAILACVLTLLVLILLIV) threads the bilayer. The Cytoplasmic portion of the chain corresponds to 629–785 (TMKRRKKEPL…YGNGQESLYS (157 aa)).

It localises to the cell membrane. In terms of biological role, cadherins are calcium-dependent cell adhesion proteins. They preferentially interact with themselves in a homophilic manner in connecting cells; cadherins may thus contribute to the sorting of heterogeneous cell types. The polypeptide is Cadherin-7 (Cdh7) (Rattus norvegicus (Rat)).